The chain runs to 468 residues: Siroheme synthase 1 (468 aa).

A precorrin-2 dehydrogenase /sirohydrochlorin ferrochelatase region spans residues 1–204; the sequence is MDYLPIFCRL…GDKASANQLA (204 aa). Residues 22-23 and 43-44 contribute to the NAD(+) site; these read EV and PA. Residue Ser128 is modified to Phosphoserine. Residues 216–468 are uroporphyrinogen-III C-methyltransferase; the sequence is GEVILVGAGP…NHGVQAAALA (253 aa). Residue Pro225 coordinates S-adenosyl-L-methionine. The Proton acceptor role is filled by Asp248. The active-site Proton donor is Lys270. Residues 301-303, Ile306, 331-332, Met383, and Gly412 contribute to the S-adenosyl-L-methionine site; these read GGD and TA.

In the N-terminal section; belongs to the precorrin-2 dehydrogenase / sirohydrochlorin ferrochelatase family. The protein in the C-terminal section; belongs to the precorrin methyltransferase family.

The catalysed reaction is uroporphyrinogen III + 2 S-adenosyl-L-methionine = precorrin-2 + 2 S-adenosyl-L-homocysteine + H(+). It carries out the reaction precorrin-2 + NAD(+) = sirohydrochlorin + NADH + 2 H(+). The enzyme catalyses siroheme + 2 H(+) = sirohydrochlorin + Fe(2+). Its pathway is cofactor biosynthesis; adenosylcobalamin biosynthesis; precorrin-2 from uroporphyrinogen III: step 1/1. It participates in cofactor biosynthesis; adenosylcobalamin biosynthesis; sirohydrochlorin from precorrin-2: step 1/1. The protein operates within porphyrin-containing compound metabolism; siroheme biosynthesis; precorrin-2 from uroporphyrinogen III: step 1/1. It functions in the pathway porphyrin-containing compound metabolism; siroheme biosynthesis; siroheme from sirohydrochlorin: step 1/1. Its pathway is porphyrin-containing compound metabolism; siroheme biosynthesis; sirohydrochlorin from precorrin-2: step 1/1. In terms of biological role, multifunctional enzyme that catalyzes the SAM-dependent methylations of uroporphyrinogen III at position C-2 and C-7 to form precorrin-2 via precorrin-1. Then it catalyzes the NAD-dependent ring dehydrogenation of precorrin-2 to yield sirohydrochlorin. Finally, it catalyzes the ferrochelation of sirohydrochlorin to yield siroheme. The sequence is that of Siroheme synthase 1 from Aeromonas salmonicida (strain A449).